The sequence spans 631 residues: Fatty acid ABC transporter ATP-binding/permease protein (631 aa).

Low complexity predominate over residues 1–11 (MTAPPGARPRA). The segment at 1 to 20 (MTAPPGARPRAASPPPNMRS) is disordered. 3 helical membrane passes run 42–62 (IAVI…PRIL), 123–143 (LALA…QARL), and 205–225 (ILTM…LALI). An ABC transmembrane type-1 domain is found at 42–365 (IAVITLGIAG…LAGMYNALQS (324 aa)). An ABC transporter domain is found at 397–631 (VEFEHVNFAY…RGVYYQMTRA (235 aa)). 430–437 (GPTGAGKT) serves as a coordination point for ATP.

Belongs to the ABC transporter superfamily. Lipid exporter (TC 3.A.1.106) family.

Its subcellular location is the cell inner membrane. ABC transporter involved in fatty acid import. Transmembrane domains (TMD) form a pore in the membrane and the ATP-binding domain (NBD) is responsible for energy generation. In Mycobacterium bovis (strain ATCC BAA-935 / AF2122/97), this protein is Fatty acid ABC transporter ATP-binding/permease protein.